The chain runs to 194 residues: Large ribosomal subunit protein bL9 (194 aa).

The segment at 169-194 (DDINDNARPENFFDPNAEFDGGEDNA) is disordered.

The protein belongs to the bacterial ribosomal protein bL9 family.

Functionally, binds to the 23S rRNA. This Mesorhizobium japonicum (strain LMG 29417 / CECT 9101 / MAFF 303099) (Mesorhizobium loti (strain MAFF 303099)) protein is Large ribosomal subunit protein bL9.